We begin with the raw amino-acid sequence, 283 residues long: MMTYWPSPAKLNLFLYITGQRADGYHTLQTLFQFLDYGDTLHIEPRRDGEIHLLTPVNGVENEDNLIVRAARGLMKAALESGRLPAGSGADISIEKRLPMGGGLGGGSSNAATVLVALNHLWQCGLSVDELAKLGLTLGADVPVFVRGHAAFAEGVGEILTPVNPPEKWYLVAHPGVIIPTPVIFKDPQLPRNTPKRSIDTLLKCEFSNDCEVIARKRFREVDAALSWLLEYAPSRLTGTGACVFAEFDTEPCARQVLEQAPEWLNAFVAKGVNLSPLHRSLL.

K10 is an active-site residue. 99 to 109 (PMGGGLGGGSS) is a binding site for ATP. D141 is a catalytic residue.

The protein belongs to the GHMP kinase family. IspE subfamily. In terms of assembly, homodimer.

The catalysed reaction is 4-CDP-2-C-methyl-D-erythritol + ATP = 4-CDP-2-C-methyl-D-erythritol 2-phosphate + ADP + H(+). It participates in isoprenoid biosynthesis; isopentenyl diphosphate biosynthesis via DXP pathway; isopentenyl diphosphate from 1-deoxy-D-xylulose 5-phosphate: step 3/6. In terms of biological role, catalyzes the phosphorylation of the position 2 hydroxy group of 4-diphosphocytidyl-2C-methyl-D-erythritol. The protein is 4-diphosphocytidyl-2-C-methyl-D-erythritol kinase of Salmonella arizonae (strain ATCC BAA-731 / CDC346-86 / RSK2980).